Here is a 251-residue protein sequence, read N- to C-terminus: Cell division protein ZapD (251 aa).

This sequence belongs to the ZapD family. Interacts with FtsZ.

It is found in the cytoplasm. Functionally, cell division factor that enhances FtsZ-ring assembly. Directly interacts with FtsZ and promotes bundling of FtsZ protofilaments, with a reduction in FtsZ GTPase activity. This chain is Cell division protein ZapD, found in Burkholderia thailandensis (strain ATCC 700388 / DSM 13276 / CCUG 48851 / CIP 106301 / E264).